A 487-amino-acid polypeptide reads, in one-letter code: MTNEVRVRYAPSPTGYPHLGNIRTAMFNWLFARHNGGKFIVRIEDTDRERYVEGAVESILESLNWLGLDWDEGPDKGGDYGPYYQSERLPLYRKAAEKLVAEGKAYYCHCSSEKLDKMREDQIARKEPPGYDRCCRDMGLGQKEGAVIRFKIPLDGQTAFTDLIRGEVTFDNAKQDDFVILKSDGFPTYHLASVVDDHAMQISHVLRAEEWLPSTPKHLMLYKALGYTPPLYAHLPMILGPDRSKLSKRHGATSTIEYKQAGYLPETMVNFLSLLGWAYDDKTELFSREQLIEYFCLEKVSKTAAIFNYEKLDWMNGMYIRTLSAQDLACRAMPFLEKDVRIAASGHLNLDYTVKVMPLIQERAKKLNELAELCWFIYSDDISYDPALLIDKKLTKETSLSALKAANARLEALPNFDAASMEEHIRPLAAELELKPGQLFGMLRTASTGQQVAPPLFQTMEVLGRQRCLWRIAMAIARLSEMPFQRS.

Positions 11 to 21 match the 'HIGH' region motif; sequence PSPTGYPHLGN. Zn(2+) contacts are provided by C108, C110, C135, and D137. A 'KMSKS' region motif is present at residues 245-249; that stretch reads KLSKR. K248 contacts ATP.

The protein belongs to the class-I aminoacyl-tRNA synthetase family. Glutamate--tRNA ligase type 1 subfamily. Monomer. Zn(2+) is required as a cofactor.

Its subcellular location is the cytoplasm. It carries out the reaction tRNA(Glu) + L-glutamate + ATP = L-glutamyl-tRNA(Glu) + AMP + diphosphate. Catalyzes the attachment of glutamate to tRNA(Glu) in a two-step reaction: glutamate is first activated by ATP to form Glu-AMP and then transferred to the acceptor end of tRNA(Glu). In Dehalococcoides mccartyi (strain CBDB1), this protein is Glutamate--tRNA ligase.